The sequence spans 136 residues: uncharacterized protein (136 aa).

It is found in the mitochondrion. This is an uncharacterized protein from Arabidopsis thaliana (Mouse-ear cress).